A 102-amino-acid chain; its full sequence is NADH-quinone oxidoreductase subunit K (102 aa).

The next 3 helical transmembrane spans lie at 6–26 (LEHG…GLMV), 30–50 (ILFV…AFVV), and 62–82 (VMFI…LAIL).

It belongs to the complex I subunit 4L family. In terms of assembly, NDH-1 is composed of 13 different subunits. Subunits NuoA, H, J, K, L, M, N constitute the membrane sector of the complex.

The protein resides in the cell inner membrane. It catalyses the reaction a quinone + NADH + 5 H(+)(in) = a quinol + NAD(+) + 4 H(+)(out). In terms of biological role, NDH-1 shuttles electrons from NADH, via FMN and iron-sulfur (Fe-S) centers, to quinones in the respiratory chain. The immediate electron acceptor for the enzyme in this species is believed to be ubiquinone. Couples the redox reaction to proton translocation (for every two electrons transferred, four hydrogen ions are translocated across the cytoplasmic membrane), and thus conserves the redox energy in a proton gradient. The polypeptide is NADH-quinone oxidoreductase subunit K (Pseudomonas syringae pv. syringae (strain B728a)).